Reading from the N-terminus, the 208-residue chain is Uridine kinase (208 aa).

11–18 (GGTGSGKS) lines the ATP pocket.

This sequence belongs to the uridine kinase family.

Its subcellular location is the cytoplasm. The catalysed reaction is uridine + ATP = UMP + ADP + H(+). It carries out the reaction cytidine + ATP = CMP + ADP + H(+). Its pathway is pyrimidine metabolism; CTP biosynthesis via salvage pathway; CTP from cytidine: step 1/3. It participates in pyrimidine metabolism; UMP biosynthesis via salvage pathway; UMP from uridine: step 1/1. This chain is Uridine kinase, found in Clostridium perfringens (strain SM101 / Type A).